The chain runs to 274 residues: 2,3,4,5-tetrahydropyridine-2,6-dicarboxylate N-succinyltransferase (274 aa).

R104 and D141 together coordinate substrate.

The protein belongs to the transferase hexapeptide repeat family. In terms of assembly, homotrimer.

It localises to the cytoplasm. It catalyses the reaction (S)-2,3,4,5-tetrahydrodipicolinate + succinyl-CoA + H2O = (S)-2-succinylamino-6-oxoheptanedioate + CoA. The protein operates within amino-acid biosynthesis; L-lysine biosynthesis via DAP pathway; LL-2,6-diaminopimelate from (S)-tetrahydrodipicolinate (succinylase route): step 1/3. In Edwardsiella ictaluri (strain 93-146), this protein is 2,3,4,5-tetrahydropyridine-2,6-dicarboxylate N-succinyltransferase.